We begin with the raw amino-acid sequence, 78 residues long: UPF0349 protein SSP1836 (78 aa).

It belongs to the UPF0349 family.

The polypeptide is UPF0349 protein SSP1836 (Staphylococcus saprophyticus subsp. saprophyticus (strain ATCC 15305 / DSM 20229 / NCIMB 8711 / NCTC 7292 / S-41)).